The chain runs to 415 residues: Citrate (Re)-synthase (415 aa).

Residues 4 to 275 (IFIIDVTNRD…GHEVDLSKAW (272 aa)) enclose the Pyruvate carboxyltransferase domain.

This sequence belongs to the alpha-IPM synthase/homocitrate synthase family. It depends on Mn(2+) as a cofactor.

It catalyses the reaction oxaloacetate + acetyl-CoA + H2O = citrate + CoA + H(+). Inhibited by citrate and under aerobic conditions. Catalyzes the condensation of the acetyl group of acetyl coenzyme A (acetyl-CoA) with oxaloacetate to form citrate. This enzyme is highly Re-face stereospecific with respect to the C-2 of oxaloacetate. This chain is Citrate (Re)-synthase, found in Dehalococcoides mccartyi (strain CBDB1).